Consider the following 353-residue polypeptide: Peptide chain release factor 1 (353 aa).

An N5-methylglutamine modification is found at Gln-230.

This sequence belongs to the prokaryotic/mitochondrial release factor family. Methylated by PrmC. Methylation increases the termination efficiency of RF1.

The protein resides in the cytoplasm. Its function is as follows. Peptide chain release factor 1 directs the termination of translation in response to the peptide chain termination codons UAG and UAA. The protein is Peptide chain release factor 1 of Gluconobacter oxydans (strain 621H) (Gluconobacter suboxydans).